A 155-amino-acid chain; its full sequence is Snaclec clone 2100755 (155 aa).

The N-terminal stretch at 1-23 (MGRFIFVSFGLLVVFLSLSGTAA) is a signal peptide. 3 disulfide bridges follow: cysteine 25-cysteine 36, cysteine 53-cysteine 144, and cysteine 119-cysteine 136. A C-type lectin domain is found at 32–145 (YDGHCYQVFS…CEKSVSFVCK (114 aa)).

Belongs to the snaclec family. Heterodimer; disulfide-linked.

It is found in the secreted. In terms of biological role, interferes with one step of hemostasis (modulation of platelet aggregation, or coagulation cascade, for example). The sequence is that of Snaclec clone 2100755 from Deinagkistrodon acutus (Hundred-pace snake).